A 294-amino-acid chain; its full sequence is Lipoyl synthase (294 aa).

Residues cysteine 38, cysteine 43, cysteine 49, cysteine 64, cysteine 68, cysteine 71, and serine 277 each contribute to the [4Fe-4S] cluster site. Positions 50–266 (WSRGTATFLL…RSFAEGAGFR (217 aa)) constitute a Radical SAM core domain.

Belongs to the radical SAM superfamily. Lipoyl synthase family. The cofactor is [4Fe-4S] cluster.

It is found in the cytoplasm. The enzyme catalyses [[Fe-S] cluster scaffold protein carrying a second [4Fe-4S](2+) cluster] + N(6)-octanoyl-L-lysyl-[protein] + 2 oxidized [2Fe-2S]-[ferredoxin] + 2 S-adenosyl-L-methionine + 4 H(+) = [[Fe-S] cluster scaffold protein] + N(6)-[(R)-dihydrolipoyl]-L-lysyl-[protein] + 4 Fe(3+) + 2 hydrogen sulfide + 2 5'-deoxyadenosine + 2 L-methionine + 2 reduced [2Fe-2S]-[ferredoxin]. It participates in protein modification; protein lipoylation via endogenous pathway; protein N(6)-(lipoyl)lysine from octanoyl-[acyl-carrier-protein]: step 2/2. In terms of biological role, catalyzes the radical-mediated insertion of two sulfur atoms into the C-6 and C-8 positions of the octanoyl moiety bound to the lipoyl domains of lipoate-dependent enzymes, thereby converting the octanoylated domains into lipoylated derivatives. The protein is Lipoyl synthase of Pelodictyon phaeoclathratiforme (strain DSM 5477 / BU-1).